Consider the following 355-residue polypeptide: Peptide chain release factor 1 (355 aa).

Position 231 is an N5-methylglutamine (Gln-231).

This sequence belongs to the prokaryotic/mitochondrial release factor family. Methylated by PrmC. Methylation increases the termination efficiency of RF1.

The protein localises to the cytoplasm. Peptide chain release factor 1 directs the termination of translation in response to the peptide chain termination codons UAG and UAA. This Aliarcobacter butzleri (strain RM4018) (Arcobacter butzleri) protein is Peptide chain release factor 1.